Reading from the N-terminus, the 161-residue chain is Cuticle protein 16.8 (161 aa).

Gln-1 is modified (pyrrolidone carboxylic acid). The segment covering Gln-1–Pro-10 has biased composition (pro residues). Disordered stretches follow at residues Gln-1 to Thr-44 and Glu-67 to Pro-103. The region spanning Pro-8–Lys-74 is the Chitin-binding type R&amp;R domain. Over residues Glu-67–Asn-86 the composition is skewed to polar residues. Over residues Ala-87–Pro-103 the composition is skewed to low complexity.

Its function is as follows. Component of the cuticle of the tick. Binds chitin. In Ixodes ricinus (Common tick), this protein is Cuticle protein 16.8.